The following is a 157-amino-acid chain: Small ribosomal subunit protein uS7 (157 aa).

This sequence belongs to the universal ribosomal protein uS7 family. As to quaternary structure, part of the 30S ribosomal subunit. Contacts proteins S9 and S11.

Its function is as follows. One of the primary rRNA binding proteins, it binds directly to 16S rRNA where it nucleates assembly of the head domain of the 30S subunit. Is located at the subunit interface close to the decoding center, probably blocks exit of the E-site tRNA. The chain is Small ribosomal subunit protein uS7 from Chlamydia caviae (strain ATCC VR-813 / DSM 19441 / 03DC25 / GPIC) (Chlamydophila caviae).